A 588-amino-acid chain; its full sequence is Intracellular maltogenic amylase (588 aa).

Ca(2+) contacts are provided by Asn-149, Ser-155, Gly-174, and Asp-176. Residues His-249 and Arg-325 each coordinate substrate. Asp-327 acts as the Nucleophile in catalysis. The Proton donor role is filled by Glu-356. Residues 422-423 (HD), Asp-467, and Arg-471 contribute to the substrate site.

Belongs to the glycosyl hydrolase 13 family. BbmA subfamily. As to quaternary structure, monomer or homodimer; in equilibrium. Ca(2+) is required as a cofactor.

It localises to the cytoplasm. Its function is as follows. Hydrolyzes beta-cyclodextrin to maltose and glucose, soluble starch to maltose and glucose, and pullulan to panose with trace amounts of maltose and glucose. It is also able to hydrolyze acarbose. Can also exhibit a transglycosylation activity transferring glucose or maltose to another moiety of sugars by forming alpha-(1,6)- and alpha-(1,3)-glycosidic linkages upon the hydrolysis of substrate at concentrations of 5% or higher. The chain is Intracellular maltogenic amylase (bbmA) from Bacillus subtilis (strain 168).